Here is a 237-residue protein sequence, read N- to C-terminus: DNA repair protein RecO (237 aa).

The protein belongs to the RecO family.

In terms of biological role, involved in DNA repair and RecF pathway recombination. The protein is DNA repair protein RecO of Flavobacterium johnsoniae (strain ATCC 17061 / DSM 2064 / JCM 8514 / BCRC 14874 / CCUG 350202 / NBRC 14942 / NCIMB 11054 / UW101) (Cytophaga johnsonae).